The chain runs to 261 residues: tRNA pseudouridine synthase A (261 aa).

The Nucleophile role is filled by D51. Y109 contacts substrate.

Belongs to the tRNA pseudouridine synthase TruA family. Homodimer.

The enzyme catalyses uridine(38/39/40) in tRNA = pseudouridine(38/39/40) in tRNA. Formation of pseudouridine at positions 38, 39 and 40 in the anticodon stem and loop of transfer RNAs. This is tRNA pseudouridine synthase A from Shewanella sp. (strain W3-18-1).